Consider the following 498-residue polypeptide: Envelop protein OPG153 (498 aa).

Cys43 and Cys342 are oxidised to a cystine. The tract at residues 352–391 is disordered; that stretch reads ATDTGHHQDSKINIKDDDVDDDDYNPKPTPIPEPYPRPPF. Residues 355-367 are compositionally biased toward basic and acidic residues; sequence TGHHQDSKINIKD. Residues 378–390 are compositionally biased toward pro residues; the sequence is KPTPIPEPYPRPP.

Belongs to the orthopoxvirus OPG153 protein family. As to quaternary structure, interacts with proteins OPG094 and OPG143. Interacts with OPG154. Interacts with OPG152. Interacts with host laminin.

The protein localises to the virion membrane. Its function is as follows. Envelop protein that mediates acid-dependent endocytosis into host cells. Plays an important role in endocytic entry of the virus by acting as an acid-sensitive membrane fusion suppressor. Low pH in host endosomes triggers conformational changes to allow de-repression of viral fusion complex activity and membrane fusion within vesicles. Also plays a role in bridging the mature virion with structural protein OPG152. The sequence is that of Envelop protein OPG153 (Protein OPG153) from Variola virus (isolate Human/India/Ind3/1967) (VARV).